The primary structure comprises 129 residues: Small ribosomal subunit protein uS11 (129 aa).

It belongs to the universal ribosomal protein uS11 family. Part of the 30S ribosomal subunit. Interacts with proteins S7 and S18. Binds to IF-3.

In terms of biological role, located on the platform of the 30S subunit, it bridges several disparate RNA helices of the 16S rRNA. Forms part of the Shine-Dalgarno cleft in the 70S ribosome. This Bacillus anthracis (strain A0248) protein is Small ribosomal subunit protein uS11.